The primary structure comprises 240 residues: Biosynthetic peptidoglycan transglycosylase (240 aa).

A helical transmembrane segment spans residues 15-35; it reads WMFYLGAVVAIAWLATQAFYF.

Belongs to the glycosyltransferase 51 family.

The protein resides in the cell inner membrane. The catalysed reaction is [GlcNAc-(1-&gt;4)-Mur2Ac(oyl-L-Ala-gamma-D-Glu-L-Lys-D-Ala-D-Ala)](n)-di-trans,octa-cis-undecaprenyl diphosphate + beta-D-GlcNAc-(1-&gt;4)-Mur2Ac(oyl-L-Ala-gamma-D-Glu-L-Lys-D-Ala-D-Ala)-di-trans,octa-cis-undecaprenyl diphosphate = [GlcNAc-(1-&gt;4)-Mur2Ac(oyl-L-Ala-gamma-D-Glu-L-Lys-D-Ala-D-Ala)](n+1)-di-trans,octa-cis-undecaprenyl diphosphate + di-trans,octa-cis-undecaprenyl diphosphate + H(+). Its pathway is cell wall biogenesis; peptidoglycan biosynthesis. Functionally, peptidoglycan polymerase that catalyzes glycan chain elongation from lipid-linked precursors. The chain is Biosynthetic peptidoglycan transglycosylase from Paraburkholderia xenovorans (strain LB400).